We begin with the raw amino-acid sequence, 976 residues long: Terminal uridylyltransferase 1 (976 aa).

Disordered regions lie at residues 1-47 (MVSK…DADF) and 129-185 (TGRS…TTEG). The interval 1–188 (MVSKYHRLLQ…EDDTTEGPRG (188 aa)) is required for oligomerization and may contribute to the incorporation into the MPsome complex. Positions 147–183 (ADDESDGNLDTDGSDASEGDEVESTTDADVYGEDDTT) are enriched in acidic residues. The segment at 190–221 (VRLYSCDACPHAVFTTHAALLAHAEEHHADLL) adopts a C2H2-type; atypical zinc-finger fold. Zn(2+)-binding residues include Cys195, Cys198, His212, and His217. Residues Ser298 and 309 to 312 (ADID) each bind UTP. Residues Asp310 and Asp312 each contribute to the Mg(2+) site. Arg358 serves as a coordination point for RNA. Positions 366–425 (ASSPILTVARRDAEDVVARSIRFILNGPATREDRLLLEGSVRDAVGPTGVQQVWWNRTSD) constitute a PAP-associated domain. UTP-binding positions include 480–484 (GIRNS), Lys505, Lys509, and 523–524 (SY). Positions 652-661 (IEDPYEENLN) match the Nucleotide recognition motif (NRM) motif. The interval 700–976 (DSSGTPAAGG…SKVTPFKSPR (277 aa)) is important for catalytic activity and RNA binding. Positions 732-755 (SESRRLPQSNSDNSGRIANGDNES) are disordered.

It belongs to the DNA polymerase type-B-like family. Oligomer. Component of the mitochondrial 3' processome (MPsome) complex composed at least of terminal uridylyltransferase KRET1/TUT1, 3'-5' exonuclease DSS1, MPSS1, MPSS2 and MPSS3. Within the complex, interacts with DSS1, MPSS1 and MPSS3. Mg(2+) serves as cofactor. Requires Mn(2+) as cofactor.

It is found in the mitochondrion. The enzyme catalyses RNA(n) + UTP = RNA(n)-3'-uridine ribonucleotide + diphosphate. Terminal uridylyltransferase which is involved in the post-transcriptional editing of mitochondrial RNA, a process involving the addition and deletion of uridine (U) nucleotides in the pre-RNA. Specifically, catalyzes the addition of Us to the 3'-hydroxyl group of guided RNA (gRNA), ribosomal RNA (rRNA) and some mRNAs. As part of the mitochondrial 3' processome (MPsome), catalyzes the primary 3' uridylation of gRNA precursors to facilitate their recognition and to induce their processive 3'-5' degradation by DSS1, and the secondary 3' uridylation of mature gRNAs. Involved in the 3' uridylylation of the long A/U tail of some edited and never-edited mRNAs. Promotes 3' uridylylation-mediated decay of some never-edited mRNAs. Does not mediate RNA-independent UTP polymerization. The sequence is that of Terminal uridylyltransferase 1 from Trypanosoma brucei brucei.